We begin with the raw amino-acid sequence, 94 residues long: Large ribosomal subunit protein bL28 (94 aa).

Belongs to the bacterial ribosomal protein bL28 family.

The polypeptide is Large ribosomal subunit protein bL28 (Hyphomonas neptunium (strain ATCC 15444)).